We begin with the raw amino-acid sequence, 304 residues long: Pseudouridine-5'-phosphate glycosidase (304 aa).

The Proton donor role is filled by Glu-25. Residues Lys-88 and Val-108 each contribute to the substrate site. Residue Asp-140 coordinates Mn(2+). 142–144 (SAD) contributes to the substrate binding site. Residue Lys-161 is the Nucleophile of the active site.

Belongs to the pseudouridine-5'-phosphate glycosidase family. Homotrimer. The cofactor is Mn(2+).

The catalysed reaction is D-ribose 5-phosphate + uracil = psi-UMP + H2O. Catalyzes the reversible cleavage of pseudouridine 5'-phosphate (PsiMP) to ribose 5-phosphate and uracil. Functions biologically in the cleavage direction, as part of a pseudouridine degradation pathway. The chain is Pseudouridine-5'-phosphate glycosidase from Paracoccus denitrificans (strain Pd 1222).